Consider the following 347-residue polypeptide: Mitochondrial glycine transporter (347 aa).

Solcar repeat units follow at residues 18-102 (SKPT…LRTA), 138-222 (LSHT…SKRS), and 247-331 (STAS…LIMW). Transmembrane regions (helical) follow at residues 24 to 49 (FAAG…TRVQ), 77 to 103 (GTLP…RTAV), 144 to 169 (LITG…VRYE), 197 to 220 (GFGA…EQSK), 251 to 277 (INFI…KTRV), and 306 to 324 (GLGL…AWTV).

Belongs to the mitochondrial carrier (TC 2.A.29) family. SLC25A38 subfamily.

The protein resides in the mitochondrion inner membrane. The catalysed reaction is glycine(in) = glycine(out). Its function is as follows. Mitochondrial glycine transporter that imports glycine into the mitochondrial matrix. Plays an important role in providing glycine for the first enzymatic step in heme biosynthesis, the condensation of glycine with succinyl-CoA to produce 5-aminolevulinate (ALA) in the mitochondrial matrix. This chain is Mitochondrial glycine transporter, found in Coccidioides immitis (strain RS) (Valley fever fungus).